The primary structure comprises 432 residues: Serine hydroxymethyltransferase (432 aa).

Residues leucine 131 and 135–137 each bind (6S)-5,6,7,8-tetrahydrofolate; that span reads GHL. Lysine 240 carries the post-translational modification N6-(pyridoxal phosphate)lysine.

This sequence belongs to the SHMT family. In terms of assembly, homodimer. It depends on pyridoxal 5'-phosphate as a cofactor.

It localises to the cytoplasm. The enzyme catalyses (6R)-5,10-methylene-5,6,7,8-tetrahydrofolate + glycine + H2O = (6S)-5,6,7,8-tetrahydrofolate + L-serine. It participates in one-carbon metabolism; tetrahydrofolate interconversion. It functions in the pathway amino-acid biosynthesis; glycine biosynthesis; glycine from L-serine: step 1/1. Its function is as follows. Catalyzes the reversible interconversion of serine and glycine with tetrahydrofolate (THF) serving as the one-carbon carrier. This reaction serves as the major source of one-carbon groups required for the biosynthesis of purines, thymidylate, methionine, and other important biomolecules. Also exhibits THF-independent aldolase activity toward beta-hydroxyamino acids, producing glycine and aldehydes, via a retro-aldol mechanism. This is Serine hydroxymethyltransferase from Bradyrhizobium diazoefficiens (strain JCM 10833 / BCRC 13528 / IAM 13628 / NBRC 14792 / USDA 110).